Here is a 62-residue protein sequence, read N- to C-terminus: UPF0434 protein RSc2531 (62 aa).

This sequence belongs to the UPF0434 family.

This Ralstonia nicotianae (strain ATCC BAA-1114 / GMI1000) (Ralstonia solanacearum) protein is UPF0434 protein RSc2531.